Reading from the N-terminus, the 72-residue chain is Translation initiation factor IF-1 (72 aa).

The 72-residue stretch at 1-72 (MAKEDVIEMQ…SKGRIVFRAR (72 aa)) folds into the S1-like domain.

The protein belongs to the IF-1 family. In terms of assembly, component of the 30S ribosomal translation pre-initiation complex which assembles on the 30S ribosome in the order IF-2 and IF-3, IF-1 and N-formylmethionyl-tRNA(fMet); mRNA recruitment can occur at any time during PIC assembly.

The protein resides in the cytoplasm. In terms of biological role, one of the essential components for the initiation of protein synthesis. Stabilizes the binding of IF-2 and IF-3 on the 30S subunit to which N-formylmethionyl-tRNA(fMet) subsequently binds. Helps modulate mRNA selection, yielding the 30S pre-initiation complex (PIC). Upon addition of the 50S ribosomal subunit IF-1, IF-2 and IF-3 are released leaving the mature 70S translation initiation complex. The protein is Translation initiation factor IF-1 of Vibrio cholerae serotype O1 (strain ATCC 39541 / Classical Ogawa 395 / O395).